The sequence spans 136 residues: Blasticidin-S acetyltransferase (136 aa).

One can recognise an N-acetyltransferase domain in the interval 1–136; the sequence is MLSLPRLQTV…ITSHLLVKEL (136 aa).

Confers resistance to blasticidin S antibiotic. The chain is Blasticidin-S acetyltransferase (bls) from Streptomyces morookaense (Streptoverticillium morookaense).